The following is a 198-amino-acid chain: Protein uvp1 (198 aa).

In terms of domain architecture, Resolvase/invertase-type recombinase catalytic spans 1-140 (MIIGYARKST…SGLAAARARG (140 aa)). Serine 9 serves as the catalytic O-(5'-phospho-DNA)-serine intermediate. The H-T-H motif DNA-binding region spans 168–187 (VGAVAKRFNVSRMTIYRYTT).

Belongs to the site-specific recombinase resolvase family.

Functionally, cooperates with the mucAB genes in the DNA repair process. Could be a resolvase-invertase protein. This chain is Protein uvp1 (uvp1), found in Escherichia coli.